The sequence spans 552 residues: MRQSWRPELLIVGAVVVIEGLQAAQRACGQRGPGPPEPQEGNTLPGEWPWQASVRRQGVHICSGSLVADTWVLTAAHCFEKMATAELSSWSVVLGSLKQEGQSPGAEEVGVAALQLPKAYNHYSQGSDLALLQLTHPTVQTTLCLPQPTYHFPFGASCWATGWDQNTSDVSRTLRNLRLRLISRPTCNCLYNRLHQRLLSNPARPGMLCGGAQPGEQGPCQGDSGGPVMCREPDGHWVQVGIISFTSKCAQEDTPVLLTDMAVHSSWLQAHVHEAAFLVQAPGVVKMSDENSCVACGSLRSAGPQAGALSQWPWDARLKHHGKLACGGALVSEVVVLTAAHCFIGRQTLEEWSVGLGAGPEEWGLKQLILHGAYTHPEGGYDVAFLLLAQPVTLGPGLRPLCLPYADHHLPDGEHGWVLGLTQKAGINYPQTVPVTVLGPMACSRQHAAPGGTGIPILPGMVCTTVVGEPPHCEGLSGAPLVHEIRGTWFLVGLHSFGDTCQSSAKPAVFAALSAYEDWISNLDWQVYFAEEPEPEAETGSCLVNSSQPASC.

The signal sequence occupies residues 1–23; that stretch reads MRQSWRPELLIVGAVVVIEGLQA. Peptidase S1 domains lie at 24–273 and 294–525; these read AQRA…AHVH and VACG…NLDW. The tract at residues 27-46 is disordered; the sequence is ACGQRGPGPPEPQEGNTLPG. Cys62 and Cys78 are oxidised to a cystine. Active-site charge relay system residues include His77 and Asp128. Cystine bridges form between Cys158–Cys230, Cys187–Cys209, Cys220–Cys249, and Cys326–Cys342. Catalysis depends on charge relay system residues Ser224, His341, and Asp382. 2 cysteine pairs are disulfide-bonded: Cys443–Cys463 and Cys473–Cys501. The Charge relay system role is filled by Ser477.

It belongs to the peptidase S1 family.

Its subcellular location is the secreted. Functionally, in vitro can degrade the fibrinogen alpha chain of as well as pro-urokinase-type plasminogen activator. In Mus musculus (Mouse), this protein is Serine protease 53 (Prss53).